Here is a 960-residue protein sequence, read N- to C-terminus: Anoctamin-1 (960 aa).

Residues 1–333 (MRVPEKYSTL…FGEKVGLYFA (333 aa)) lie on the Cytoplasmic side of the membrane. Residues 92-115 (TRSVRQDQPLPGKGSPVDAGSPEV) form a disordered region. The residue at position 196 (Ser196) is a Phosphoserine. The helical transmembrane segment at 334 to 354 (WLGAYTQMLIPASIVGVIVFL) threads the bilayer. Residues 355 to 406 (YGCATVDENIPSMEMCDQRYNITMCPLCDKTCSYWKMSSACATARASHLFDN) lie on the Extracellular side of the membrane. 4 disulfides stabilise this stretch: Cys370/Cys395, Cys379/Cys836, Cys382/Cys386, and Cys625/Cys630. The chain crosses the membrane as a helical span at residues 407–427 (PATVFFSVFMALWAATFMEHW). Glu425 contributes to the Ca(2+) binding site. Topologically, residues 428–493 (KRKQMRLNYR…RDRFPAYFTN (66 aa)) are cytoplasmic. Residues 494–514 (LVSIIFMIAVTFAIVLGVIIY) form a helical membrane-spanning segment. Topologically, residues 515 to 542 (RISTAAALAMNSSPSVRSNIRVTVTATA) are extracellular. A helical membrane pass occupies residues 543-563 (VIINLVVIILLDEVYGCIARW). At 564–581 (LTKIEVPKTEKSFEERLT) the chain is on the cytoplasmic side. The helical transmembrane segment at 582 to 602 (FKAFLLKFVNSYTPIFYVAFF) threads the bilayer. Topologically, residues 603–631 (KGRFVGRPGDYVYIFRSFRMEECAPGGCL) are extracellular. A helical transmembrane segment spans residues 632-652 (MELCIQLSIIMLGKQLIQNNL). Residues Asn651, Glu654, Glu702, Glu705, Glu734, and Asp738 each contribute to the Ca(2+) site. At 653 to 699 (FEIGIPKMKKFIRYLKLRRQSPSDREEYVKRKQRYEVDFNLEPFAGL) the chain is on the cytoplasmic side. 2 helical membrane passes run 700 to 720 (TPEY…VASF) and 721 to 741 (PLAP…DAKK). Topologically, residues 742-758 (FVTELRRPVAIRAKDIG) are cytoplasmic. Residues 759–779 (IWYNILRGVGKLAVIINAFVI) traverse the membrane as a helical segment. Residues 780 to 866 (SFTSDFIPRL…FWAVLAARLA (87 aa)) lie on the Extracellular side of the membrane. Asn806 is a glycosylation site (N-linked (GlcNAc...) asparagine). A helical transmembrane segment spans residues 867-887 (FVIVFQNLVMFMSDFVDWVIP). Residues Asp883 and Asp888 each contribute to the Ca(2+) site. The Cytoplasmic portion of the chain corresponds to 888–960 (DIPKDISQQI…PSYEYHGDAL (73 aa)). Residues 928–960 (PRDVPCNNHSPTTHPEAGDGSPVPSYEYHGDAL) are disordered.

It belongs to the anoctamin family. As to quaternary structure, homodimer. Interacts with CFTR. Interacts with TRPV4. In terms of tissue distribution, expressed at the apical surface of the vomeronasal epithelium (at protein level). Expressed in the lateral and septal nasal glands (at protein level). Highly expressed in pulmonary bronchiole epithelial cells, pancreatic and submandibular gland acinar cells, kidney proximal tubule, all retinal cell layers, most sensory cells of dorsal root ganglia, Leydig cells and spermatocytes (at protein level). In the dorsal root ganglia, detected in small-diameter nociceptive neurons and in larger myelinated neurons (at protein level). In the dorsal root ganglia, expressed in MrgprA3-positive neurons (at protein level). In the developing brain, highly expressed in the ventricular zone and subventricular zone at 12.5 dpc and 14.5 dpc where it is detected in radial glial cells but not in neurons with expression dramatically decreased at P1 (at protein level). Highly expressed in the endometrial stroma (at protein level). In taste buds of the vallate papillae, expressed in the apical region of type I taste cells (at protein level). In the kidney, expressed in the collecting duct (at protein level). In the retina, strongly expressed in the outer and inner plexiform layers, weakly expressed in some somata in the inner nuclear layer and ganglion cell layer and not expressed in the outer nuclear layer (at protein level). Expressed in various retinal neurons including rod bipolar cells (at protein level). Expressed in eye, brain, myometrium and endometrium with higher levels in endometrium than myometrium in estrus and day 18 pregnant mice. Not detected in uterine smooth muscle cells. Expressed at high levels in the thyroid gland and gastrointestinal muscles.

Its subcellular location is the apical cell membrane. The protein localises to the presynapse. The enzyme catalyses chloride(in) = chloride(out). With respect to regulation, ATP and calmodulin are essential for its activation. Channel activity is inhibited by CFTR protein and by chloride inhibitors such as niflumic acid (NFA) and 4,4'-diisothiocyanatostilbene-2,2'-disulfonic acid (DIDS). Activated by heat with activation seen at temperatures above 44 degrees Celsius. Activated by BDNF in radial glial cells. Calcium-activated chloride channel (CaCC). Plays a role in transepithelial anion transport and smooth muscle contraction. Required for the normal functioning of the interstitial cells of Cajal (ICCs) which generate electrical pacemaker activity in gastrointestinal smooth muscles. Acts as a major contributor to basal and stimulated chloride conductance in airway epithelial cells and plays an important role in tracheal cartilage development. Required for CFTR activation by enhancing endoplasmic reticulum Ca(2+) store release and is also required for CFTR membrane expression. Required for basal and ATP-dependent mucus secretion in airways and intestine, probably by controlling exocytosis of mucus-filled granules by providing Ca(2+) to an apical signaling compartment. Contributes to airway mucus expression induced by interleukins IL3 and IL8 and by the asthma-associated protein CLCA1 and is required for expression of mucin MUC5AC. However, was shown in another study not to be required for MUC5AC expression. Plays a role in the propagation of Ca(2+) waves in Kolliker's organ in the cochlea and contributes to the refinement of auditory brainstem circuitries prior to hearing onset. In vomeronasal sensory neurons, modulates spontaneous firing patterns in the absence of stimuli as well as the firing pattern of pheromone-evoked activity. Responsible for calcium-activated chloride channel activity in type I taste cells of the vallate papillae. Acts as a heat sensor in nociceptive neurons. In dorsal root ganglion neurons, plays a role in mediating non-histaminergic Mas-related G-protein coupled receptor (MRGPR)-dependent itching, acting as a downstream effector of MRGPRs. In the developing brain, required for the Ca(2+)-dependent process extension of radial glial cells. This is Anoctamin-1 (Ano1) from Mus musculus (Mouse).